A 192-amino-acid polypeptide reads, in one-letter code: Fe/S biogenesis protein NfuA (192 aa).

Residues Cys-149 and Cys-152 each contribute to the [4Fe-4S] cluster site.

It belongs to the NfuA family. As to quaternary structure, homodimer. [4Fe-4S] cluster serves as cofactor.

Functionally, involved in iron-sulfur cluster biogenesis. Binds a 4Fe-4S cluster, can transfer this cluster to apoproteins, and thereby intervenes in the maturation of Fe/S proteins. Could also act as a scaffold/chaperone for damaged Fe/S proteins. This is Fe/S biogenesis protein NfuA from Aeromonas hydrophila subsp. hydrophila (strain ATCC 7966 / DSM 30187 / BCRC 13018 / CCUG 14551 / JCM 1027 / KCTC 2358 / NCIMB 9240 / NCTC 8049).